The sequence spans 430 residues: Trigger factor (430 aa).

Residues 163–248 enclose the PPIase FKBP-type domain; it reads GNIAIIDFKG…IKDIKVKELP (86 aa).

Belongs to the FKBP-type PPIase family. Tig subfamily.

The protein localises to the cytoplasm. It carries out the reaction [protein]-peptidylproline (omega=180) = [protein]-peptidylproline (omega=0). Functionally, involved in protein export. Acts as a chaperone by maintaining the newly synthesized protein in an open conformation. Functions as a peptidyl-prolyl cis-trans isomerase. The protein is Trigger factor of Clostridium botulinum (strain Loch Maree / Type A3).